A 159-amino-acid polypeptide reads, in one-letter code: 2-C-methyl-D-erythritol 2,4-cyclodiphosphate synthase (159 aa).

Residues aspartate 8 and histidine 10 each contribute to the a divalent metal cation site. 4-CDP-2-C-methyl-D-erythritol 2-phosphate is bound by residues 8 to 10 (DVH) and 34 to 35 (HS). Histidine 42 lines the a divalent metal cation pocket. Residues 56–58 (DIG), 61–65 (FPDTD), 100–106 (AQAPKMA), 132–135 (TTTE), phenylalanine 139, and arginine 142 each bind 4-CDP-2-C-methyl-D-erythritol 2-phosphate.

The protein belongs to the IspF family. In terms of assembly, homotrimer. A divalent metal cation is required as a cofactor.

It catalyses the reaction 4-CDP-2-C-methyl-D-erythritol 2-phosphate = 2-C-methyl-D-erythritol 2,4-cyclic diphosphate + CMP. The protein operates within isoprenoid biosynthesis; isopentenyl diphosphate biosynthesis via DXP pathway; isopentenyl diphosphate from 1-deoxy-D-xylulose 5-phosphate: step 4/6. Its function is as follows. Involved in the biosynthesis of isopentenyl diphosphate (IPP) and dimethylallyl diphosphate (DMAPP), two major building blocks of isoprenoid compounds. Catalyzes the conversion of 4-diphosphocytidyl-2-C-methyl-D-erythritol 2-phosphate (CDP-ME2P) to 2-C-methyl-D-erythritol 2,4-cyclodiphosphate (ME-CPP) with a corresponding release of cytidine 5-monophosphate (CMP). The polypeptide is 2-C-methyl-D-erythritol 2,4-cyclodiphosphate synthase (Cronobacter sakazakii (strain ATCC BAA-894) (Enterobacter sakazakii)).